A 510-amino-acid polypeptide reads, in one-letter code: ATP synthase subunit alpha (510 aa).

169–176 (GDRQTGKT) lines the ATP pocket.

The protein belongs to the ATPase alpha/beta chains family. As to quaternary structure, F-type ATPases have 2 components, CF(1) - the catalytic core - and CF(0) - the membrane proton channel. CF(1) has five subunits: alpha(3), beta(3), gamma(1), delta(1), epsilon(1). CF(0) has three main subunits: a(1), b(2) and c(9-12). The alpha and beta chains form an alternating ring which encloses part of the gamma chain. CF(1) is attached to CF(0) by a central stalk formed by the gamma and epsilon chains, while a peripheral stalk is formed by the delta and b chains.

The protein resides in the cell inner membrane. The catalysed reaction is ATP + H2O + 4 H(+)(in) = ADP + phosphate + 5 H(+)(out). Produces ATP from ADP in the presence of a proton gradient across the membrane. The alpha chain is a regulatory subunit. The sequence is that of ATP synthase subunit alpha from Anaeromyxobacter dehalogenans (strain 2CP-C).